The following is a 655-amino-acid chain: p-hydroxybenzoic acid efflux pump subunit AaeB (655 aa).

11 helical membrane passes run 13–33 (FAVK…HFQL), 38–58 (WAVL…GGEP), 69–89 (LRII…ISMI), 93–113 (LLMI…SSLV), 121–141 (WGLS…EPLL), 152–172 (EIVI…PRSI), 370–390 (LFWL…IAVV), 407–427 (FIYG…VIIP), 431–451 (QSML…GIEV), 459–479 (MGAL…TFHF), and 482–502 (FLDS…VILL).

It belongs to the aromatic acid exporter ArAE (TC 2.A.85) family.

It is found in the cell inner membrane. Forms an efflux pump with AaeA. Could function as a metabolic relief valve, allowing to eliminate certain compounds when they accumulate to high levels in the cell. The protein is p-hydroxybenzoic acid efflux pump subunit AaeB of Salmonella dublin (strain CT_02021853).